A 94-amino-acid chain; its full sequence is Large ribosomal subunit protein bL25 (94 aa).

This sequence belongs to the bacterial ribosomal protein bL25 family. As to quaternary structure, part of the 50S ribosomal subunit; part of the 5S rRNA/L5/L18/L25 subcomplex. Contacts the 5S rRNA. Binds to the 5S rRNA independently of L5 and L18.

Its function is as follows. This is one of the proteins that binds to the 5S RNA in the ribosome where it forms part of the central protuberance. This is Large ribosomal subunit protein bL25 from Salmonella arizonae (strain ATCC BAA-731 / CDC346-86 / RSK2980).